The following is a 483-amino-acid chain: ATP synthase subunit beta (483 aa).

167–174 serves as a coordination point for ATP; sequence GGAGVGKT.

It belongs to the ATPase alpha/beta chains family. As to quaternary structure, F-type ATPases have 2 components, CF(1) - the catalytic core - and CF(0) - the membrane proton channel. CF(1) has five subunits: alpha(3), beta(3), gamma(1), delta(1), epsilon(1). CF(0) has three main subunits: a(1), b(2) and c(9-12). The alpha and beta chains form an alternating ring which encloses part of the gamma chain. CF(1) is attached to CF(0) by a central stalk formed by the gamma and epsilon chains, while a peripheral stalk is formed by the delta and b chains.

It is found in the cell membrane. It carries out the reaction ATP + H2O + 4 H(+)(in) = ADP + phosphate + 5 H(+)(out). In terms of biological role, produces ATP from ADP in the presence of a proton gradient across the membrane. The catalytic sites are hosted primarily by the beta subunits. This is ATP synthase subunit beta from Paenarthrobacter aurescens (strain TC1).